The following is a 367-amino-acid chain: Pyrimidine monooxygenase RutA (367 aa).

FMN contacts are provided by residues 50–51 (IK), N116, E125, 141–142 (RY), and S191.

This sequence belongs to the NtaA/SnaA/DszA monooxygenase family. RutA subfamily.

It catalyses the reaction uracil + FMNH2 + NADH + O2 = (Z)-3-ureidoacrylate + FMN + NAD(+) + H2O + H(+). The enzyme catalyses thymine + FMNH2 + NADH + O2 = (Z)-2-methylureidoacrylate + FMN + NAD(+) + H2O + H(+). Catalyzes the pyrimidine ring opening between N-3 and C-4 by an unusual flavin hydroperoxide-catalyzed mechanism, adding oxygen atoms in the process to yield ureidoacrylate peracid, that immediately reacts with FMN forming ureidoacrylate and FMN-N(5)-oxide. The FMN-N(5)-oxide reacts spontaneously with NADH to produce FMN. Requires the flavin reductase RutF to regenerate FMN in vivo. This Allorhizobium ampelinum (strain ATCC BAA-846 / DSM 112012 / S4) (Agrobacterium vitis (strain S4)) protein is Pyrimidine monooxygenase RutA.